A 1383-amino-acid chain; its full sequence is DNA-directed RNA polymerase subunit beta (1383 aa).

The protein belongs to the RNA polymerase beta chain family. As to quaternary structure, the RNAP catalytic core consists of 2 alpha, 1 beta, 1 beta' and 1 omega subunit. When a sigma factor is associated with the core the holoenzyme is formed, which can initiate transcription.

The enzyme catalyses RNA(n) + a ribonucleoside 5'-triphosphate = RNA(n+1) + diphosphate. In terms of biological role, DNA-dependent RNA polymerase catalyzes the transcription of DNA into RNA using the four ribonucleoside triphosphates as substrates. The chain is DNA-directed RNA polymerase subunit beta from Xanthomonas oryzae pv. oryzae (strain MAFF 311018).